The following is a 286-amino-acid chain: Bifunctional protein FolD (286 aa).

Residues 165–167 (GRS), S190, and V231 each bind NADP(+).

Belongs to the tetrahydrofolate dehydrogenase/cyclohydrolase family. As to quaternary structure, homodimer.

The catalysed reaction is (6R)-5,10-methylene-5,6,7,8-tetrahydrofolate + NADP(+) = (6R)-5,10-methenyltetrahydrofolate + NADPH. It carries out the reaction (6R)-5,10-methenyltetrahydrofolate + H2O = (6R)-10-formyltetrahydrofolate + H(+). Its pathway is one-carbon metabolism; tetrahydrofolate interconversion. Functionally, catalyzes the oxidation of 5,10-methylenetetrahydrofolate to 5,10-methenyltetrahydrofolate and then the hydrolysis of 5,10-methenyltetrahydrofolate to 10-formyltetrahydrofolate. This chain is Bifunctional protein FolD, found in Bacillus cytotoxicus (strain DSM 22905 / CIP 110041 / 391-98 / NVH 391-98).